The chain runs to 116 residues: MKFTKTEARKRRHFRVRHKVVGTAERPRLNVFKSNTNFYAQIIDDTKGVTLVSASTLKMDLKSKSNIQAAEKVAEELTKKALAANINQVVFDRNGYLYHGKIKAFAQKARENGLKF.

Belongs to the universal ribosomal protein uL18 family. Part of the 50S ribosomal subunit; part of the 5S rRNA/L5/L18/L25 subcomplex. Contacts the 5S and 23S rRNAs.

Functionally, this is one of the proteins that bind and probably mediate the attachment of the 5S RNA into the large ribosomal subunit, where it forms part of the central protuberance. The protein is Large ribosomal subunit protein uL18 of Mycoplasma capricolum subsp. capricolum (strain California kid / ATCC 27343 / NCTC 10154).